The primary structure comprises 255 residues: 1-(5-phosphoribosyl)-5-[(5-phosphoribosylamino)methylideneamino] imidazole-4-carboxamide isomerase (255 aa).

The Proton acceptor role is filled by aspartate 8. The Proton donor role is filled by aspartate 129.

This sequence belongs to the HisA/HisF family.

The protein localises to the cytoplasm. The enzyme catalyses 1-(5-phospho-beta-D-ribosyl)-5-[(5-phospho-beta-D-ribosylamino)methylideneamino]imidazole-4-carboxamide = 5-[(5-phospho-1-deoxy-D-ribulos-1-ylimino)methylamino]-1-(5-phospho-beta-D-ribosyl)imidazole-4-carboxamide. It functions in the pathway amino-acid biosynthesis; L-histidine biosynthesis; L-histidine from 5-phospho-alpha-D-ribose 1-diphosphate: step 4/9. The chain is 1-(5-phosphoribosyl)-5-[(5-phosphoribosylamino)methylideneamino] imidazole-4-carboxamide isomerase from Gloeobacter violaceus (strain ATCC 29082 / PCC 7421).